A 268-amino-acid polypeptide reads, in one-letter code: tRNA pseudouridine synthase A (268 aa).

Aspartate 52 serves as the catalytic Nucleophile. Position 113 (tyrosine 113) interacts with substrate.

It belongs to the tRNA pseudouridine synthase TruA family. Homodimer.

It catalyses the reaction uridine(38/39/40) in tRNA = pseudouridine(38/39/40) in tRNA. Formation of pseudouridine at positions 38, 39 and 40 in the anticodon stem and loop of transfer RNAs. In Rhizobium leguminosarum bv. trifolii (strain WSM2304), this protein is tRNA pseudouridine synthase A.